We begin with the raw amino-acid sequence, 148 residues long: Urease accessory protein UreE (148 aa).

Belongs to the UreE family.

Its subcellular location is the cytoplasm. In terms of biological role, involved in urease metallocenter assembly. Binds nickel. Probably functions as a nickel donor during metallocenter assembly. The protein is Urease accessory protein UreE of Geobacillus kaustophilus (strain HTA426).